Reading from the N-terminus, the 397-residue chain is uncharacterized protein (397 aa).

4 helical membrane-spanning segments follow: residues 142–162 (WETI…VGIA), 191–211 (SQLL…SVVL), 242–258 (ALTG…TYFL), and 260–280 (APWL…SAGF).

It belongs to the cation diffusion facilitator (CDF) transporter (TC 2.A.4) family. SLC30A subfamily.

The protein localises to the membrane. This is an uncharacterized protein from Schizosaccharomyces pombe (strain 972 / ATCC 24843) (Fission yeast).